A 179-amino-acid chain; its full sequence is UPF0398 protein Bsph_0756 (179 aa).

This sequence belongs to the UPF0398 family.

The chain is UPF0398 protein Bsph_0756 from Lysinibacillus sphaericus (strain C3-41).